The chain runs to 963 residues: Trehalose synthase (963 aa).

Aspartate 60 is a binding site for substrate. Residue asparagine 100 participates in Ca(2+) binding. Substrate contacts are provided by histidine 101 and glutamine 165. A Ca(2+)-binding site is contributed by aspartate 167. Arginine 195 provides a ligand contact to substrate. Aspartate 197 functions as the Nucleophile in the catalytic mechanism. Ca(2+)-binding residues include tyrosine 201, leucine 202, and glutamate 204. Glutamate 240 functions as the Proton donor in the catalytic mechanism. 2 residues coordinate substrate: histidine 305 and aspartate 306.

Belongs to the glycosyl hydrolase 13 family. TreS subfamily.

The catalysed reaction is D-maltose = alpha,alpha-trehalose. Its function is as follows. Catalyzes the reversible interconversion of maltose and alpha,alpha-trehalose by transglucosylation. In Thermus thermophilus, this protein is Trehalose synthase (treS).